The chain runs to 249 residues: DNA polymerase sliding clamp (249 aa).

This sequence belongs to the PCNA family. Homotrimer. The subunits circularize to form a toroid; DNA passes through its center. Replication factor C (RFC) is required to load the toroid on the DNA.

Functionally, sliding clamp subunit that acts as a moving platform for DNA processing. Responsible for tethering the catalytic subunit of DNA polymerase and other proteins to DNA during high-speed replication. The chain is DNA polymerase sliding clamp from Thermococcus onnurineus (strain NA1).